A 180-amino-acid polypeptide reads, in one-letter code: Large ribosomal subunit protein uL6 (180 aa).

The protein belongs to the universal ribosomal protein uL6 family. In terms of assembly, part of the 50S ribosomal subunit.

In terms of biological role, this protein binds to the 23S rRNA, and is important in its secondary structure. It is located near the subunit interface in the base of the L7/L12 stalk, and near the tRNA binding site of the peptidyltransferase center. The protein is Large ribosomal subunit protein uL6 of Salinispora tropica (strain ATCC BAA-916 / DSM 44818 / JCM 13857 / NBRC 105044 / CNB-440).